We begin with the raw amino-acid sequence, 643 residues long: Ecto-NOX disulfide-thiol exchanger 1 (643 aa).

The RRM domain maps to K142 to A221. 2 coiled-coil regions span residues V307–I342 and Q425–L570.

This sequence belongs to the ENOX family. Requires Cu cation as cofactor. In terms of tissue distribution, expressed in lymphocyte cells, breast and breast cancer (at protein level). Found in the sera of cancer patients with a wide variety of cancers including breast, prostate, lung and ovarian cancers, leukemias, and lymphomas. Found also in the serum of healthy volunteers or patients with disorders other than cancer. Probably shed into serum by cancer cells.

It is found in the cell membrane. The protein localises to the secreted. The protein resides in the extracellular space. With respect to regulation, not inhibited by the antitumor sulfonylurea LY181984, the vabilloid capsaicin, and retinoids. Its function is as follows. Probably acts as a terminal oxidase of plasma electron transport from cytosolic NAD(P)H via hydroquinones to acceptors at the cell surface. Hydroquinone oxidase activity alternates with a protein disulfide-thiol interchange/oxidoreductase activity which may control physical membrane displacements associated with vesicle budding or cell enlargement. The activities oscillate with a period length of 24 minutes and play a role in control of the ultradian cellular biological clock. The sequence is that of Ecto-NOX disulfide-thiol exchanger 1 (ENOX1) from Homo sapiens (Human).